Here is a 380-residue protein sequence, read N- to C-terminus: Alkanesulfonate monooxygenase (380 aa).

It belongs to the SsuD family. Homotetramer.

It catalyses the reaction an alkanesulfonate + FMNH2 + O2 = an aldehyde + FMN + sulfite + H2O + 2 H(+). Its function is as follows. Catalyzes the desulfonation of aliphatic sulfonates. This chain is Alkanesulfonate monooxygenase, found in Pectobacterium carotovorum subsp. carotovorum (strain PC1).